Here is a 68-residue protein sequence, read N- to C-terminus: MPQKDPCQKQACEIQKCLQANNYLESKCQAVIQELRKCCARYPKGRSLVCSGFEKEEEEKLAMKSGSK.

Residues 4-46 enclose the CHCH domain; that stretch reads KDPCQKQACEIQKCLQANNYLESKCQAVIQELRKCCARYPKGR. 2 short sequence motifs (cx9C motif) span residues 7-17 and 28-38; these read CQKQACEIQKC and CQAVIQELRKC. 3 cysteine pairs are disulfide-bonded: Cys7–Cys38, Cys17–Cys28, and Cys39–Cys50.

It belongs to the CMC4 family. As to expression, expressed in many tissues.

It localises to the mitochondrion. The polypeptide is Cx9C motif-containing protein 4 (Cmc4) (Mus musculus (Mouse)).